The chain runs to 125 residues: Probable prefoldin subunit 6 (125 aa).

The protein belongs to the prefoldin subunit beta family. As to quaternary structure, heterohexamer of two PFD-alpha type and four PFD-beta type subunits.

Functionally, binds specifically to cytosolic chaperonin (c-CPN) and transfers target proteins to it. Binds to nascent polypeptide chain and promotes folding in an environment in which there are many competing pathways for nonnative proteins. This Drosophila melanogaster (Fruit fly) protein is Probable prefoldin subunit 6.